A 210-amino-acid polypeptide reads, in one-letter code: 3-hexulose-6-phosphate synthase (210 aa).

It belongs to the HPS/KGPDC family. HPS subfamily.

It carries out the reaction D-ribulose 5-phosphate + formaldehyde = D-arabino-hex-3-ulose 6-phosphate. It functions in the pathway one-carbon metabolism; formaldehyde assimilation via RuMP pathway; D-fructose 6-phosphate from D-ribulose 5-phosphate and formaldehyde: step 1/2. In terms of biological role, catalyzes the condensation of ribulose 5-phosphate with formaldehyde to form 3-hexulose 6-phosphate. In Staphylococcus haemolyticus (strain JCSC1435), this protein is 3-hexulose-6-phosphate synthase.